The following is a 206-amino-acid chain: Probable NAD(+) phosphorylase Rv3189 (206 aa).

Belongs to the MbcT/ParT/Res family. In terms of assembly, forms a heterotetramer with cognate antitoxin Rv3188.

It carries out the reaction phosphate + NAD(+) = ADP-alpha-D-ribose 1''-phosphate + nicotinamide + H(+). In terms of biological role, probable toxic component of a type II toxin-antitoxin (TA) system. Degrades NAD(+) by phosphorolysis. Neutralized by its cognate antitoxin Rv3188. The protein is Probable NAD(+) phosphorylase Rv3189 of Mycobacterium tuberculosis (strain ATCC 25618 / H37Rv).